The chain runs to 331 residues: Ketol-acid reductoisomerase (NADP(+)) (331 aa).

A KARI N-terminal Rossmann domain is found at 2 to 182; that stretch reads AKVYYDEDAN…GGTKGGVLET (181 aa). Residues 25–28, Ser-51, Ser-53, and 83–86 each bind NADP(+); these read YGSQ and DEKQ. His-108 is a catalytic residue. Gly-134 serves as a coordination point for NADP(+). The KARI C-terminal knotted domain maps to 183–328; it reads TFKDETETDL…VELRAMMPWL (146 aa). Mg(2+)-binding residues include Asp-191, Glu-195, Glu-227, and Glu-231. Ser-252 serves as a coordination point for substrate.

The protein belongs to the ketol-acid reductoisomerase family. Mg(2+) is required as a cofactor.

It catalyses the reaction (2R)-2,3-dihydroxy-3-methylbutanoate + NADP(+) = (2S)-2-acetolactate + NADPH + H(+). The catalysed reaction is (2R,3R)-2,3-dihydroxy-3-methylpentanoate + NADP(+) = (S)-2-ethyl-2-hydroxy-3-oxobutanoate + NADPH + H(+). The protein operates within amino-acid biosynthesis; L-isoleucine biosynthesis; L-isoleucine from 2-oxobutanoate: step 2/4. It functions in the pathway amino-acid biosynthesis; L-valine biosynthesis; L-valine from pyruvate: step 2/4. Involved in the biosynthesis of branched-chain amino acids (BCAA). Catalyzes an alkyl-migration followed by a ketol-acid reduction of (S)-2-acetolactate (S2AL) to yield (R)-2,3-dihydroxy-isovalerate. In the isomerase reaction, S2AL is rearranged via a Mg-dependent methyl migration to produce 3-hydroxy-3-methyl-2-ketobutyrate (HMKB). In the reductase reaction, this 2-ketoacid undergoes a metal-dependent reduction by NADPH to yield (R)-2,3-dihydroxy-isovalerate. The chain is Ketol-acid reductoisomerase (NADP(+)) from Clostridium novyi (strain NT).